A 147-amino-acid polypeptide reads, in one-letter code: Large ribosomal subunit protein uL13 (147 aa).

The protein belongs to the universal ribosomal protein uL13 family. Part of the 50S ribosomal subunit.

Its function is as follows. This protein is one of the early assembly proteins of the 50S ribosomal subunit, although it is not seen to bind rRNA by itself. It is important during the early stages of 50S assembly. This is Large ribosomal subunit protein uL13 from Kocuria rhizophila (strain ATCC 9341 / DSM 348 / NBRC 103217 / DC2201).